We begin with the raw amino-acid sequence, 599 residues long: Elongation factor 4 (599 aa).

The tr-type G domain occupies 2–184 (NYKRNFSIIA…RLVRDIPAPK (183 aa)). Residues 14–19 (DHGKST) and 131–134 (NKID) contribute to the GTP site.

Belongs to the TRAFAC class translation factor GTPase superfamily. Classic translation factor GTPase family. LepA subfamily.

The protein resides in the cell membrane. It carries out the reaction GTP + H2O = GDP + phosphate + H(+). Functionally, required for accurate and efficient protein synthesis under certain stress conditions. May act as a fidelity factor of the translation reaction, by catalyzing a one-codon backward translocation of tRNAs on improperly translocated ribosomes. Back-translocation proceeds from a post-translocation (POST) complex to a pre-translocation (PRE) complex, thus giving elongation factor G a second chance to translocate the tRNAs correctly. Binds to ribosomes in a GTP-dependent manner. In Hamiltonella defensa subsp. Acyrthosiphon pisum (strain 5AT), this protein is Elongation factor 4.